Reading from the N-terminus, the 307-residue chain is Mitochondrial thiamine pyrophosphate carrier 1 (307 aa).

Solcar repeat units lie at residues 13–95, 105–190, and 203–305; these read VSTT…IGSF, SPQL…IKIF, and PFTL…FMNK. Helical transmembrane passes span 19-36, 76-96, 108-126, 160-184, 210-226, and 280-297; these read LVAG…IAPL, IMYI…GSFL, LYSC…LASY, MGFF…FGVY, LAGP…TFPL, and GVTM…ISLW.

The protein belongs to the mitochondrial carrier (TC 2.A.29) family.

It is found in the mitochondrion inner membrane. Mitochondrial transporter that mediates uptake of thiamine pyrophosphate (ThPP) into mitochondria. The protein is Mitochondrial thiamine pyrophosphate carrier 1 (TPC1) of Candida glabrata (strain ATCC 2001 / BCRC 20586 / JCM 3761 / NBRC 0622 / NRRL Y-65 / CBS 138) (Yeast).